A 106-amino-acid chain; its full sequence is Protein translation factor SUI1 homolog (106 aa).

This sequence belongs to the SUI1 family.

The chain is Protein translation factor SUI1 homolog from Methanopyrus kandleri (strain AV19 / DSM 6324 / JCM 9639 / NBRC 100938).